Consider the following 490-residue polypeptide: Auxin transporter-like protein 5 (490 aa).

Over M1–Q55 the chain is Cytoplasmic. The chain crosses the membrane as a helical span at residues V56–L73. Over S74–G75 the chain is Extracellular. A helical membrane pass occupies residues I76 to L96. Topologically, residues Y97–N132 are cytoplasmic. A helical transmembrane segment spans residues V133–C153. Over A154–T168 the chain is Extracellular. Residues W169–Y189 traverse the membrane as a helical segment. R190 is a topological domain (cytoplasmic). Residues I191–A211 traverse the membrane as a helical segment. The Extracellular portion of the chain corresponds to V212–K227. A helical membrane pass occupies residues I228–T248. Topologically, residues V249 to K262 are cytoplasmic. The chain crosses the membrane as a helical span at residues A263–V283. The Extracellular segment spans residues Y284–A310. N-linked (GlcNAc...) asparagine glycosylation occurs at N293. Residues V311–F331 traverse the membrane as a helical segment. The Cytoplasmic segment spans residues V332 to R352. The chain crosses the membrane as a helical span at residues L353 to N373. The Extracellular segment spans residues S374–V376. Residues G377–F397 form a helical membrane-spanning segment. Topologically, residues K398–T420 are cytoplasmic. Residues F421–W441 form a helical membrane-spanning segment. Topologically, residues A442 to H490 are extracellular. N-linked (GlcNAc...) asparagine glycosylation is present at N479.

Belongs to the amino acid/polyamine transporter 2 family. Amino acid/auxin permease (AAAP) (TC 2.A.18.1) subfamily. In terms of tissue distribution, shoots and roots of nodulating plants, at low levels.

It is found in the cell membrane. In terms of biological role, carrier protein involved in proton-driven auxin influx. Mediates the formation of auxin gradient from developing leaves (site of auxin biosynthesis) to tips by contributing to the loading of auxin in vascular tissues and facilitating acropetal (base to tip) auxin transport within inner tissues of the root apex, and basipetal (tip to base) auxin transport within outer tissues of the root apex. May be involved in lateral roots and nodules formation. This is Auxin transporter-like protein 5 (LAX5) from Medicago truncatula (Barrel medic).